A 448-amino-acid polypeptide reads, in one-letter code: Protein odr-4 homolog (448 aa).

2 helical membrane-spanning segments follow: residues 76–96 and 428–448; these read ASQLGRMLPGGLMVLGVFLMT and GLLISTVVASIAVIISFYYII.

Belongs to the ODR-4 family.

It localises to the membrane. Functionally, may play a role in the trafficking of a subset of G-protein coupled receptors. The sequence is that of Protein odr-4 homolog (odr4) from Xenopus tropicalis (Western clawed frog).